Consider the following 170-residue polypeptide: Protein BofC (170 aa).

The N-terminal stretch at Met1 to Gly30 is a signal peptide.

In terms of assembly, monomer.

The protein resides in the forespore intermembrane space. In terms of biological role, inhibits the SpoIVB zymogen from undergoing autocatalytic activation by an unknown mechanism, and in this way plays a role in the sigma-K checkpoint of sporulation. This is Protein BofC (bofC) from Bacillus subtilis (strain 168).